Reading from the N-terminus, the 529-residue chain is 1,4-beta-D-glucan cellobiohydrolase xynA (529 aa).

Residues 1-25 (MSALNSFNMYKSALILGSLLATAGA) form the signal peptide. A catalytic region spans residues 26 to 456 (QQIGTYTAET…SDIKVGPFNS (431 aa)). Residues asparagine 70 and asparagine 219 are each glycosylated (N-linked (GlcNAc...) asparagine). The Nucleophile role is filled by glutamate 234. Glutamate 239 serves as the catalytic Proton donor. N-linked (GlcNAc...) asparagine glycosylation occurs at asparagine 413. Positions 413-438 (NETGTPGAARGSCPTTSGNPKTVESQ) are disordered. Residues 425-438 (CPTTSGNPKTVESQ) show a composition bias toward polar residues. Asparagine 455 carries N-linked (GlcNAc...) asparagine glycosylation. The tract at residues 457-493 (TFSGGTSTGGSTTTTASGTTSTKASTTSTSSTSTGTG) is thr-rich linker. The segment at 460–491 (GGTSTGGSTTTTASGTTSTKASTTSTSSTSTG) is disordered. Positions 493 to 529 (GVAAHWGQCGGQGWTGPTTCASGTTCTVVNPYYSQCL) constitute a CBM1 domain. Disulfide bonds link cysteine 501–cysteine 518 and cysteine 512–cysteine 528.

This sequence belongs to the glycosyl hydrolase 7 (cellulase C) family.

It is found in the secreted. The catalysed reaction is Hydrolysis of (1-&gt;4)-beta-D-glucosidic linkages in cellulose and cellotetraose, releasing cellobiose from the non-reducing ends of the chains.. With respect to regulation, cellobiose inhibits xynA at high concentrations. Functionally, the biological conversion of cellulose to glucose generally requires three types of hydrolytic enzymes: (1) Endoglucanases which cut internal beta-1,4-glucosidic bonds; (2) Exocellobiohydrolases that cut the disaccharide cellobiose from the non-reducing end of the cellulose polymer chain; (3) Beta-1,4-glucosidases which hydrolyze the cellobiose and other short cello-oligosaccharides to glucose. The protein is 1,4-beta-D-glucan cellobiohydrolase xynA (xynA) of Talaromyces funiculosus (Fruitlet core rot fungus).